Here is a 112-residue protein sequence, read N- to C-terminus: Prostatic steroid-binding protein C2 (112 aa).

An N-terminal signal peptide occupies residues 1–20; it reads MRLSLCLLTILVVCCYEANG. Residue glutamine 21 is modified to Pyrrolidone carboxylic acid.

It belongs to the secretoglobin family. Lipophilin subfamily. As to quaternary structure, prostatein is composed of three different peptides called C1, C2 and C3. These form covalent C1:C3 (F) and C2:C3 (S) heterodimers whose noncovalent association forms tetrameric (C1:C3/C3:C2) prostatein molecules. In terms of processing, linked by three disulfide bonds to C3. Post-translationally, the N-terminus is blocked.

It is found in the secreted. Its function is as follows. Part of prostatein which is the major secretory glycoprotein of ventral prostate gland. The protein is Prostatic steroid-binding protein C2 (Psbpc2) of Rattus norvegicus (Rat).